The sequence spans 186 residues: uncharacterized protein (186 aa).

3 consecutive transmembrane segments (helical) span residues 43 to 63, 69 to 89, and 143 to 163; these read GAWV…HAIP, LAWT…FHWV, and WMFL…LPAV.

The protein resides in the endoplasmic reticulum membrane. This is an uncharacterized protein from Schizosaccharomyces pombe (strain 972 / ATCC 24843) (Fission yeast).